Consider the following 283-residue polypeptide: Bifunctional protein FolD (283 aa).

NADP(+) is bound by residues 159–161 (GRS), serine 184, and isoleucine 225.

The protein belongs to the tetrahydrofolate dehydrogenase/cyclohydrolase family. As to quaternary structure, homodimer.

The catalysed reaction is (6R)-5,10-methylene-5,6,7,8-tetrahydrofolate + NADP(+) = (6R)-5,10-methenyltetrahydrofolate + NADPH. The enzyme catalyses (6R)-5,10-methenyltetrahydrofolate + H2O = (6R)-10-formyltetrahydrofolate + H(+). It participates in one-carbon metabolism; tetrahydrofolate interconversion. Catalyzes the oxidation of 5,10-methylenetetrahydrofolate to 5,10-methenyltetrahydrofolate and then the hydrolysis of 5,10-methenyltetrahydrofolate to 10-formyltetrahydrofolate. This is Bifunctional protein FolD from Methanoculleus marisnigri (strain ATCC 35101 / DSM 1498 / JR1).